Reading from the N-terminus, the 43-residue chain is Omega-ctenitoxin-Pr1a (43 aa).

Cystine bridges form between Cys-2/Cys-17, Cys-9/Cys-22, Cys-16/Cys-33, and Cys-24/Cys-31. Glycine amide is present on Gly-43.

In terms of tissue distribution, expressed by the venom gland.

The protein localises to the secreted. Its function is as follows. Inhibits high-voltage activated calcium channels. Shifts the voltage-dependence for activation towards hyperpolarized membrane potentials for L- (Cav1), P/Q- (Cav2.1/CACNA1A) and R-type (Cav2.3/CACNA1E) calcium currents. Causes immediate agitation and clockwise gyration, followed by the gradual development of general flaccid paralysis when injected intracerebroventricular into mice at dose levels of 5 ug per mouse. The protein is Omega-ctenitoxin-Pr1a of Phoneutria reidyi (Brazilian Amazonian armed spider).